The primary structure comprises 956 residues: Calsyntenin-3 (956 aa).

A signal peptide spans 1-20; it reads MARMSFLSFLLFCLTSVAHG. At 21 to 850 the chain is on the extracellular side; it reads NKANKHKPWI…PHRNSVVPGA (830 aa). 2 Cadherin domains span residues 30 to 151 and 152 to 271; these read IETE…SPVF and VERR…IPLF. N-linked (GlcNAc...) asparagine glycans are attached at residues asparagine 333, asparagine 353, asparagine 513, and asparagine 743. A helical transmembrane segment spans residues 851–871; sequence ATVIIMVCVGFLVVMVILGVF. Over 872-956 the chain is Cytoplasmic; it reads RIRSIHRRGE…EGRDSAPRRY (85 aa). Residues 921–937 show a composition bias toward acidic residues; the sequence is GECEDEEEVVDSPDDTS. Residues 921 to 956 form a disordered region; the sequence is GECEDEEEVVDSPDDTSDDQRIIIKKEGRDSAPRRY. Basic and acidic residues predominate over residues 938 to 956; the sequence is DDQRIIIKKEGRDSAPRRY.

The protein belongs to the calsyntenin family. As to quaternary structure, homooligomer and heterooligomer; mediates both homophilic and heterophilc interactions with clstn1 and clstn2 paralogs via cadherin domains. Interacts (via cadherin domains) with both alpha and beta isoforms of neurexins. As to expression, by 48 hours post-fertilization (hpf), widely expressed in the brain, with strong expression in the telencephalon and the midbrain. Not expressed in the optic tectum.

The protein resides in the postsynaptic cell membrane. The protein localises to the endoplasmic reticulum membrane. It is found in the golgi apparatus membrane. In terms of biological role, synaptic adhesion molecule. Promotes synapse development by acting as a cell adhesion molecule at the postsynaptic membrane, which associates with presynaptic neurexins. The sequence is that of Calsyntenin-3 from Danio rerio (Zebrafish).